A 313-amino-acid chain; its full sequence is Adhesin MafA 2 (313 aa).

The first 14 residues, 1 to 14 (MKTLLLLIPLVLTA), serve as a signal peptide directing secretion. A lipid anchor (N-palmitoyl cysteine) is attached at Cys15. Cys15 is lipidated: S-diacylglycerol cysteine. Residues 282–297 (GDTTAQNRPDFKQNNG) show a composition bias toward polar residues. The disordered stretch occupies residues 282–313 (GDTTAQNRPDFKQNNGKKPDVGNEVIRRRKGG).

This sequence belongs to the MafA family.

It localises to the cell outer membrane. The polypeptide is Adhesin MafA 2 (mafA2) (Neisseria meningitidis serogroup A / serotype 4A (strain DSM 15465 / Z2491)).